Consider the following 516-residue polypeptide: Extracellular endo-inulinase inuB (516 aa).

A signal peptide spans 1 to 25 (MLNPKVAYMVWMTCLGLTLPSQAQS). Residues 40-43 (WMNE), Gln-59, Trp-67, and 99-100 (FT) contribute to the substrate site. Residue Glu-43 is part of the active site. An N-linked (GlcNAc...) asparagine glycan is attached at Asn-109. Residues 175–176 (RD) and Glu-233 each bind substrate. Asn-372, Asn-419, and Asn-424 each carry an N-linked (GlcNAc...) asparagine glycan.

This sequence belongs to the glycosyl hydrolase 32 family.

It is found in the secreted. It catalyses the reaction Endohydrolysis of (2-&gt;1)-beta-D-fructosidic linkages in inulin.. Endo-inulinase involved in utilization of the plant storage polymer inulin, consisting of fructooligosaccharides with a degree of polymerization (DP) value from 2 to 60. The protein is Extracellular endo-inulinase inuB (inuB) of Aspergillus niger.